Consider the following 326-residue polypeptide: Beta-ketoacyl-[acyl-carrier-protein] synthase III 2 (326 aa).

Residues Cys114 and His251 contribute to the active site. The interval 252-256 is ACP-binding; sequence SANAR. Asn281 is an active-site residue.

The protein belongs to the thiolase-like superfamily. FabH family. Homodimer.

It localises to the cytoplasm. It carries out the reaction malonyl-[ACP] + acetyl-CoA + H(+) = 3-oxobutanoyl-[ACP] + CO2 + CoA. The protein operates within lipid metabolism; fatty acid biosynthesis. Functionally, catalyzes the condensation reaction of fatty acid synthesis by the addition to an acyl acceptor of two carbons from malonyl-ACP. Catalyzes the first condensation reaction which initiates fatty acid synthesis and may therefore play a role in governing the total rate of fatty acid production. Possesses both acetoacetyl-ACP synthase and acetyl transacylase activities. Its substrate specificity determines the biosynthesis of branched-chain and/or straight-chain of fatty acids. This chain is Beta-ketoacyl-[acyl-carrier-protein] synthase III 2, found in Staphylococcus epidermidis (strain ATCC 12228 / FDA PCI 1200).